We begin with the raw amino-acid sequence, 120 residues long: Small ribosomal subunit protein uS10 (120 aa).

Ser-16 and Ser-18 each carry phosphoserine.

The protein belongs to the universal ribosomal protein uS10 family. Expressed ubiquitously in embryos, highest expression is in the midgut.

This is Small ribosomal subunit protein uS10 (RpS20) from Drosophila melanogaster (Fruit fly).